The chain runs to 217 residues: 3,4-dihydroxy-2-butanone 4-phosphate synthase (217 aa).

Residues 37-38 (RE), Asp42, 150-154 (RRGHT), and Glu174 contribute to the D-ribulose 5-phosphate site. Position 38 (Glu38) interacts with Mg(2+). His153 lines the Mg(2+) pocket.

The protein belongs to the DHBP synthase family. Homodimer. It depends on Mg(2+) as a cofactor. Requires Mn(2+) as cofactor.

It carries out the reaction D-ribulose 5-phosphate = (2S)-2-hydroxy-3-oxobutyl phosphate + formate + H(+). Its pathway is cofactor biosynthesis; riboflavin biosynthesis; 2-hydroxy-3-oxobutyl phosphate from D-ribulose 5-phosphate: step 1/1. In terms of biological role, catalyzes the conversion of D-ribulose 5-phosphate to formate and 3,4-dihydroxy-2-butanone 4-phosphate. The sequence is that of 3,4-dihydroxy-2-butanone 4-phosphate synthase from Shewanella baltica (strain OS155 / ATCC BAA-1091).